The following is a 208-amino-acid chain: Probable GTP-binding protein EngB (208 aa).

The EngB-type G domain occupies 18-187 (KQFEICVIGR…FALMKKVVIE (170 aa)). GTP contacts are provided by residues 26–33 (GRSNVGKS), 52–56 (GRTQL), 69–72 (DLPG), 135–138 (NKVD), and 166–168 (VSA). The Mg(2+) site is built by Ser33 and Thr54.

Belongs to the TRAFAC class TrmE-Era-EngA-EngB-Septin-like GTPase superfamily. EngB GTPase family. The cofactor is Mg(2+).

Its function is as follows. Necessary for normal cell division and for the maintenance of normal septation. This Ureaplasma urealyticum serovar 10 (strain ATCC 33699 / Western) protein is Probable GTP-binding protein EngB.